The primary structure comprises 665 residues: LisH domain-containing protein ARMC9 (665 aa).

One can recognise a LisH domain in the interval 7 to 39; the sequence is HESELLGLVKEYLDFAEFEDTLKTFSKECKIKG. A coiled-coil region spans residues 201-235; sequence ENGQSNKEMLQQLHQQLVEAERRSMTYLKRYNKIQ. Phosphoserine is present on S582. The disordered stretch occupies residues 642–665; that stretch reads VQWSGDEPLQRPVTPGGHRNGYPV.

Interacts with TOGARAM1, CCDC66, CEP104, CSPP1 and CEP290. Interacts with NDUFAF2.

Its subcellular location is the cytoplasm. It localises to the cytoskeleton. The protein localises to the cilium basal body. It is found in the cell projection. The protein resides in the cilium. Its subcellular location is the microtubule organizing center. It localises to the centrosome. The protein localises to the centriole. Functionally, involved in ciliogenesis. It is required for appropriate acetylation and polyglutamylation of ciliary microtubules, and regulation of cilium length. Acts as a positive regulator of hedgehog (Hh)signaling. May participate in the trafficking and/or retention of GLI2 and GLI3 proteins at the ciliary tip. In Pongo abelii (Sumatran orangutan), this protein is LisH domain-containing protein ARMC9 (ARMC9).